The following is a 1140-amino-acid chain: Envelopment polyprotein (1140 aa).

The first 17 residues, 1 to 17 (MVGWVCIFLVVLTTATA), serve as a signal peptide directing secretion. Over 18–480 (GLTRNLYELK…AHSLAVELCV (463 aa)) the chain is Lumenal. 6 disulfide bridges follow: cysteine 30/cysteine 155, cysteine 64/cysteine 161, cysteine 113/cysteine 132, cysteine 137/cysteine 142, cysteine 179/cysteine 189, and cysteine 214/cysteine 251. Residue asparagine 138 is glycosylated (N-linked (GlcNAc...) asparagine; by host). Asparagine 351 is a glycosylation site (N-linked (GlcNAc...) asparagine; by host). 4 cysteine pairs are disulfide-bonded: cysteine 380–cysteine 439, cysteine 384–cysteine 393, cysteine 409–cysteine 428, and cysteine 456–cysteine 479. A glycan (N-linked (GlcNAc...) asparagine; by host) is linked at asparagine 403. A helical membrane pass occupies residues 490–510 (ALLITFCFGWLLIPAVTLIIL). Over 511 to 631 (KILRLLTFSC…LGVFRYKSRC (121 aa)) the chain is Cytoplasmic. The binding to the ribonucleoprotein stretch occupies residues 520 to 537 (CSHYSTESKFKVILERVK). CCHC-type zinc fingers lie at residues 549-569 (CDICHHECETAKELETHKKSC) and 574-595 (CPYCMTITESTESALQAHFAIC). Binding to the ribonucleoprotein stretches follow at residues 592-609 (FAICKLTNRFQENLKKSL), 596-607 (KLTNRFQENLKK), and 615-629 (RKGCYRTLGVFRYKS). Residues 615–638 (RKGCYRTLGVFRYKSRCYVGLVWG) enclose the ITAM domain. Phosphotyrosine is present on residues tyrosine 619 and tyrosine 632. The YxxL signature appears at 619 to 622 (YRTL). Residues 632 to 652 (YVGLVWGILLTTELIIWAASA) traverse the membrane as a helical segment. Residues 653 to 1108 (DTPLMESGWS…EWLLGILNGN (456 aa)) lie on the Lumenal side of the membrane. 8 cysteine pairs are disulfide-bonded: cysteine 739/cysteine 774, cysteine 743/cysteine 781, cysteine 755/cysteine 888, cysteine 769/cysteine 899, cysteine 784/cysteine 907, cysteine 810/cysteine 819, cysteine 827/cysteine 836, and cysteine 867/cysteine 871. The interval 761-781 (YQYETSWGCNPPDCPGVGTGC) is fusion loop. Asparagine 931 is a glycosylation site (N-linked (GlcNAc...) asparagine; by host). Disulfide bonds link cysteine 973/cysteine 1003, cysteine 996/cysteine 1048, cysteine 1013/cysteine 1018, cysteine 1049/cysteine 1054, and cysteine 1088/cysteine 1092. A helical transmembrane segment spans residues 1109 to 1129 (WVVVAVLIVILILSILLFSFF). The segment at 1125 to 1140 (LFSFFCPVRSRKNKAN) is binding to the ribonucleoprotein. At 1130 to 1140 (CPVRSRKNKAN) the chain is on the cytoplasmic side.

It belongs to the hantavirus envelope glycoprotein family. Homodimer. Homotetramer; forms heterotetrameric Gn-Gc spikes in the pre-fusion conformation. Interacts (via C-terminus) with the nucleoprotein. Interacts with host TUFM; this interaction contributes to the virus-induced degradation of mitochondria by autophagy, which leads to degradation of host MAVS and inhibition of type I interferon (IFN) responses. Interacts with host MAP1LC3B; this interaction contributes to the virus-induced degradation of mitochondria by autophagy, which leads to degradation of host MAVS and inhibition of type I interferon (IFN) responses. As to quaternary structure, homodimer. Homotetramer; forms heterotetrameric Gn-Gc spikes in the pre-fusion conformation. Homotrimer; forms homotrimer in the post-fusion conformation at acidic pH. Interacts (via C-terminus) with the nucleoprotein. Post-translationally, envelope polyprotein precursor is quickly cleaved in vivo just after synthesis, presumably by host signal peptidase.

The protein localises to the virion membrane. It localises to the host cell surface. Its subcellular location is the host Golgi apparatus membrane. The protein resides in the host endoplasmic reticulum membrane. It is found in the host mitochondrion. Functionally, forms homotetramers with glycoprotein C at the surface of the virion. Attaches the virion to host cell receptors including integrin ITGAV/ITGB3. This attachment induces virion internalization predominantly through clathrin-dependent endocytosis. Mediates the assembly and budding of infectious virus particles through its interaction with the nucleocapsid protein and the viral genome. May dysregulate normal immune and endothelial cell responses through an ITAM motif. Translocates to mitochondria, binds to host TUFM and recruits MAP1LC3B. These interactions induce mitochondrial autophagy and therefore destruction of host MAVS leading to inhibition of type I interferon (IFN) responses. Concomitant breakdown of glycoprotein N is apparently prevented by the nucleoprotein that may inhibit Gn-stimulated autophagosome-lysosome fusion. Interacts with the viral genomic RNA. Its function is as follows. Forms homotetramers with glycoprotein N at the surface of the virion. Attaches the virion to host cell receptors including integrin ITGAV/ITGB3. This attachment induces virion internalization predominantly through clathrin-dependent endocytosis. Class II fusion protein that promotes fusion of viral membrane with host endosomal membrane after endocytosis of the virion. The protein is Envelopment polyprotein (GP) of Sin Nombre orthohantavirus (SNV).